The sequence spans 980 residues: NACHT, LRR and PYD domains-containing protein 7 (980 aa).

The region spanning 1 to 93 is the Pyrin domain; sequence MTSPQLEWTL…CKMAKAEMME (93 aa). A disordered region spans residues 104 to 123; that stretch reads ELGDAEEDSELAKPGEKEGW. The segment covering 113–123 has biased composition (basic and acidic residues); that stretch reads ELAKPGEKEGW. Residues 172-491 form the NACHT domain; it reads YTVVLHGPAG…LEKEEGEDRD (320 aa). An ATP-binding site is contributed by 178–185; it reads GPAGVGKT. LRR repeat units follow at residues 614–638, 674–697, 760–784, 788–810, 817–840, 845–868, 874–897, 902–928, and 933–957; these read CQDL…DFEL, NSNL…ILCD, KCNL…FFYV, NQSL…MLLY, KHFL…DLAA, SKKL…FLCE, DCKL…YLSE, ACSL…ALEN, and LKHL…VKEK.

This sequence belongs to the NLRP family. In terms of assembly, directly interacts with CASP1 and IL1B. As to expression, expressed in numerous tissues including uterus and ovary, with low levels in heart and brain. Not detected in skeletal muscle.

Inhibits CASP1/caspase-1-dependent IL1B secretion. This Homo sapiens (Human) protein is NACHT, LRR and PYD domains-containing protein 7 (NLRP7).